Reading from the N-terminus, the 717-residue chain is Probable inactive histone-lysine N-methyltransferase SUVR2 (717 aa).

Residues 61–73 (QAIQESEEKKADE) show a composition bias toward basic and acidic residues. Residues 61-136 (QAIQESEEKK…LGSPTLEGPS (76 aa)) are disordered. Low complexity predominate over residues 120–130 (SALASPSLGSP). C445, C446, C449, C453, C462, C529, C533, C535, and C539 together coordinate Zn(2+). Residues 458–547 (MACRCATAFN…NCGNRVVQQG (90 aa)) enclose the Pre-SET domain. The SET domain occupies 550–679 (NKLQVFFTPN…AMEELTWDYG (130 aa)). S-adenosyl-L-methionine is bound by residues 561–563 (RGW) and 635–636 (NH). Residue C638 coordinates Zn(2+). Residue Y678 participates in S-adenosyl-L-methionine binding. Residues 690 to 706 (SPFHCQCGSDFCRVRKQ) enclose the Post-SET domain. Residues C694, C696, and C701 each contribute to the Zn(2+) site.

The protein belongs to the class V-like SAM-binding methyltransferase superfamily. Histone-lysine methyltransferase family. In terms of assembly, interacts with SUVR1, CHR19, CHR28 and itself. Interacts with CHR27.

It localises to the nucleus. Its subcellular location is the chromosome. In terms of biological role, probable inactive histone-lysine methyltransferase that acts as regulator of transctiptional gene silencing independently of histone H3K9 methylation. Contributes to transcriptional gene silencing at RNA-directed DNA methylation (RdDM) target loci but also at RdDM-independent target loci. Forms a complex with SUVR1 and associates with the SNF2-related chromatin-remodeling proteins CHR19, CHR27, and CHR28, thereby mediating nucleosome positioning and transcriptional silencing. Does not possess histone-lysine methyltransferase activity in vitro, and the conserved catalytic sites of SUVR2 are dispensable for its function in transcriptional gene silencing. The protein is Probable inactive histone-lysine N-methyltransferase SUVR2 (SUVR2) of Arabidopsis thaliana (Mouse-ear cress).